The following is a 68-amino-acid chain: Large ribosomal subunit protein uL29 (68 aa).

It belongs to the universal ribosomal protein uL29 family.

This is Large ribosomal subunit protein uL29 (rpl29) from Pyrococcus horikoshii (strain ATCC 700860 / DSM 12428 / JCM 9974 / NBRC 100139 / OT-3).